Here is a 362-residue protein sequence, read N- to C-terminus: Adenosine deaminase (362 aa).

Positions 19 and 21 each coordinate Zn(2+). Residues histidine 21, aspartate 23, and glycine 181 each contribute to the substrate site. Histidine 208 serves as a coordination point for Zn(2+). Glutamate 211 acts as the Proton donor in catalysis. Residue aspartate 300 coordinates Zn(2+).

This sequence belongs to the metallo-dependent hydrolases superfamily. Adenosine and AMP deaminases family. Adenosine deaminase subfamily. It depends on Zn(2+) as a cofactor.

It carries out the reaction adenosine + H2O + H(+) = inosine + NH4(+). The catalysed reaction is 2'-deoxyadenosine + H2O + H(+) = 2'-deoxyinosine + NH4(+). In terms of biological role, catalyzes the hydrolytic deamination of adenosine and 2-deoxyadenosine. The sequence is that of Adenosine deaminase from Mycobacteroides abscessus (strain ATCC 19977 / DSM 44196 / CCUG 20993 / CIP 104536 / JCM 13569 / NCTC 13031 / TMC 1543 / L948) (Mycobacterium abscessus).